The following is a 244-amino-acid chain: 7-cyano-7-deazaguanine synthase (244 aa).

Residue 14 to 24 coordinates ATP; sequence FSGGQDSATCV. The Zn(2+) site is built by C202, C217, C220, and C223.

This sequence belongs to the QueC family. Requires Zn(2+) as cofactor.

The catalysed reaction is 7-carboxy-7-deazaguanine + NH4(+) + ATP = 7-cyano-7-deazaguanine + ADP + phosphate + H2O + H(+). The protein operates within purine metabolism; 7-cyano-7-deazaguanine biosynthesis. Functionally, catalyzes the ATP-dependent conversion of 7-carboxy-7-deazaguanine (CDG) to 7-cyano-7-deazaguanine (preQ(0)). The polypeptide is 7-cyano-7-deazaguanine synthase (Burkholderia thailandensis (strain ATCC 700388 / DSM 13276 / CCUG 48851 / CIP 106301 / E264)).